The primary structure comprises 283 residues: Cyclin-C (283 aa).

The Cyclin N-terminal domain maps to 46-144 (NVIQALGEHL…ILECEFYLLE (99 aa)). Positions 252 to 283 (SILSKMPKPKPPPNSDGEQGTNGSQSSGYSQS) are disordered. Polar residues predominate over residues 267 to 283 (DGEQGTNGSQSSGYSQS).

This sequence belongs to the cyclin family. Cyclin C subfamily. In terms of assembly, component of the Mediator complex. The cylin/CDK pair formed by ccnc/cdk8 also associates with the large subunit of RNA polymerase II.

It localises to the nucleus. Functionally, component of the Mediator complex, a coactivator involved in regulated gene transcription of nearly all RNA polymerase II-dependent genes. Mediator functions as a bridge to convey information from gene-specific regulatory proteins to the basal RNA polymerase II transcription machinery. Mediator is recruited to promoters by direct interactions with regulatory proteins and serves as a scaffold for the assembly of a functional preinitiation complex with RNA polymerase II and the general transcription factors. Binds to and activates cyclin-dependent kinase cdk8 that phosphorylates the CTD (C-terminal domain) of the large subunit of RNA polymerase II (RNAp II), which may inhibit the formation of a transcription initiation complex. The protein is Cyclin-C (ccnc) of Xenopus laevis (African clawed frog).